We begin with the raw amino-acid sequence, 265 residues long: tRNA pseudouridine synthase A (265 aa).

The Nucleophile role is filled by Asp58. Tyr116 is a substrate binding site.

Belongs to the tRNA pseudouridine synthase TruA family. In terms of assembly, homodimer.

It carries out the reaction uridine(38/39/40) in tRNA = pseudouridine(38/39/40) in tRNA. Functionally, formation of pseudouridine at positions 38, 39 and 40 in the anticodon stem and loop of transfer RNAs. The polypeptide is tRNA pseudouridine synthase A (Neisseria meningitidis serogroup C / serotype 2a (strain ATCC 700532 / DSM 15464 / FAM18)).